The chain runs to 210 residues: Large ribosomal subunit protein uL3 (210 aa).

It belongs to the universal ribosomal protein uL3 family. As to quaternary structure, part of the 50S ribosomal subunit. Forms a cluster with proteins L14 and L19.

In terms of biological role, one of the primary rRNA binding proteins, it binds directly near the 3'-end of the 23S rRNA, where it nucleates assembly of the 50S subunit. The protein is Large ribosomal subunit protein uL3 of Pseudothermotoga lettingae (strain ATCC BAA-301 / DSM 14385 / NBRC 107922 / TMO) (Thermotoga lettingae).